A 245-amino-acid polypeptide reads, in one-letter code: Thiopurine S-methyltransferase (245 aa).

Position 29–40 (29–40 (WREKWVDGKIGF)) interacts with S-adenosyl-L-methionine. A substrate-binding site is contributed by Phe40. N6-acetyllysine is present on Lys58. Positions 69, 90, and 152 each coordinate S-adenosyl-L-methionine.

This sequence belongs to the class I-like SAM-binding methyltransferase superfamily. TPMT family. In terms of assembly, monomer.

It is found in the cytoplasm. The enzyme catalyses S-adenosyl-L-methionine + a thiopurine = S-adenosyl-L-homocysteine + a thiopurine S-methylether.. The chain is Thiopurine S-methyltransferase (TPMT) from Panthera leo (Lion).